Consider the following 145-residue polypeptide: Ribonuclease VapC24 (145 aa).

Residues 4–123 (IDTNILLYAQ…RHHGVDEFAT (120 aa)) enclose the PINc domain. Mg(2+)-binding residues include aspartate 5 and aspartate 106.

It belongs to the PINc/VapC protein family. The cofactor is Mg(2+).

Functionally, toxic component of a type II toxin-antitoxin (TA) system. An RNase. Its cognate antitoxin is VapB24. This chain is Ribonuclease VapC24, found in Mycobacterium tuberculosis (strain CDC 1551 / Oshkosh).